Reading from the N-terminus, the 234-residue chain is Cell polarity protein alp11 (234 aa).

Positions 4–88 constitute a Ubiquitin-like domain; it reads ITLFIKSSSA…IVVEDTRPPH (85 aa). The CAP-Gly domain occupies 174 to 216; the sequence is VPEINNDNLWVGVEFDEPVGKNDGTVSGKRYFNAKNKHGSFLR. Residue S213 is modified to Phosphoserine.

Belongs to the TBCB family. As to quaternary structure, binds to monomeric alpha-tubulin. Interacts with alp21.

The protein resides in the cytoplasm. It is found in the cytoskeleton. In terms of biological role, required for microtubule function and cell polarity. Involved in the proper folding of alpha-tubulin. This Schizosaccharomyces pombe (strain 972 / ATCC 24843) (Fission yeast) protein is Cell polarity protein alp11 (alp11).